The chain runs to 732 residues: 1,4-alpha-glucan branching enzyme GlgB (732 aa).

Asp412 acts as the Nucleophile in catalysis. Glu465 acts as the Proton donor in catalysis.

It belongs to the glycosyl hydrolase 13 family. GlgB subfamily. In terms of assembly, monomer.

The catalysed reaction is Transfers a segment of a (1-&gt;4)-alpha-D-glucan chain to a primary hydroxy group in a similar glucan chain.. It functions in the pathway glycan biosynthesis; glycogen biosynthesis. Catalyzes the formation of the alpha-1,6-glucosidic linkages in glycogen by scission of a 1,4-alpha-linked oligosaccharide from growing alpha-1,4-glucan chains and the subsequent attachment of the oligosaccharide to the alpha-1,6 position. This is 1,4-alpha-glucan branching enzyme GlgB from Pseudomonas aeruginosa (strain ATCC 15692 / DSM 22644 / CIP 104116 / JCM 14847 / LMG 12228 / 1C / PRS 101 / PAO1).